Consider the following 260-residue polypeptide: Acetylglutamate kinase (260 aa).

Substrate contacts are provided by residues Gly-41–Gly-42, Arg-63, and Asn-157.

This sequence belongs to the acetylglutamate kinase family. ArgB subfamily.

Its subcellular location is the cytoplasm. It catalyses the reaction N-acetyl-L-glutamate + ATP = N-acetyl-L-glutamyl 5-phosphate + ADP. It participates in amino-acid biosynthesis; L-arginine biosynthesis; N(2)-acetyl-L-ornithine from L-glutamate: step 2/4. Catalyzes the ATP-dependent phosphorylation of N-acetyl-L-glutamate. The protein is Acetylglutamate kinase of Acidobacterium capsulatum (strain ATCC 51196 / DSM 11244 / BCRC 80197 / JCM 7670 / NBRC 15755 / NCIMB 13165 / 161).